A 166-amino-acid polypeptide reads, in one-letter code: Lutropin subunit beta (166 aa).

Positions 1 to 21 are cleaved as a signal peptide; the sequence is MGGAQVLLLLTLLGTPLVTHG. Cystine bridges form between Cys56/Cys104, Cys70/Cys119, Cys73/Cys157, Cys81/Cys135, Cys85/Cys137, and Cys140/Cys147. An N-linked (GlcNAc...) asparagine glycan is attached at Asn60.

It belongs to the glycoprotein hormones subunit beta family. As to quaternary structure, heterodimer of a common alpha chain and a unique beta chain which confers biological specificity to thyrotropin, lutropin, follitropin and gonadotropin.

The protein resides in the secreted. Its function is as follows. Promotes spermatogenesis and ovulation by stimulating the testes and ovaries to synthesize steroids. The polypeptide is Lutropin subunit beta (LHB) (Coturnix japonica (Japanese quail)).